Here is a 763-residue protein sequence, read N- to C-terminus: ATP-dependent RNA helicase SUV3 homolog, mitochondrial (763 aa).

The transit peptide at methionine 1–lysine 43 directs the protein to the mitochondrion. In terms of domain architecture, Helicase ATP-binding spans asparagine 181–glutamate 321. Residue glycine 194–threonine 201 coordinates ATP. The region spanning arginine 330 to alanine 508 is the Helicase C-terminal domain. A disordered region spans residues alanine 724 to lysine 763. A compositionally biased stretch (polar residues) spans leucine 727–valine 741.

The protein belongs to the helicase family. Requires Mg(2+) as cofactor. Mn(2+) serves as cofactor.

The protein resides in the mitochondrion. It catalyses the reaction ATP + H2O = ADP + phosphate + H(+). Major helicase player in mitochondrial RNA metabolism and maintenance. Likely component of the mitochondrial degradosome (mtEXO) complex, that degrades 3' overhang double-stranded RNA with a 3'-to-5' directionality in an ATP-dependent manner. ATPase and ATP-dependent multisubstrate helicase, able to unwind double-stranded (ds) DNA and RNA, and RNA/DNA heteroduplexes in the 5'-to-3' direction. Regulates mRNA stability and is required for the correct processing and maturation of mitochondrial transcripts. The sequence is that of ATP-dependent RNA helicase SUV3 homolog, mitochondrial from Drosophila melanogaster (Fruit fly).